The primary structure comprises 210 residues: Small ribosomal subunit protein uS3 (210 aa).

The 69-residue stretch at 38–106 (IRAWLKKRLA…EVQINIVEIR (69 aa)) folds into the KH type-2 domain.

This sequence belongs to the universal ribosomal protein uS3 family. Part of the 30S ribosomal subunit. Forms a tight complex with proteins S10 and S14.

Its function is as follows. Binds the lower part of the 30S subunit head. Binds mRNA in the 70S ribosome, positioning it for translation. This is Small ribosomal subunit protein uS3 from Magnetococcus marinus (strain ATCC BAA-1437 / JCM 17883 / MC-1).